Consider the following 564-residue polypeptide: E3 ubiquitin-protein ligase TRIM16 (564 aa).

Positions 1–70 (MAELDLMAPG…DPAEQGDPAG (70 aa)) are disordered. A compositionally biased stretch (low complexity) spans 24-39 (SPDSGSPSPDSGSASP). 2 B box-type zinc fingers span residues 72-122 (GKEV…LTEP) and 126-165 (HNWR…IVSL). S116 carries the post-translational modification Phosphoserine. Zn(2+) is bound by residues C131, H134, C153, and H157. Coiled coils occupy residues 165 to 203 (LDAA…NQKS), 243 to 274 (AALS…RMAA), and 320 to 340 (HLIQ…KEEE). S203 is subject to Phosphoserine. Positions 355–553 (YWTSKPEPST…RIVDLGEEPE (199 aa)) constitute a B30.2/SPRY domain.

It belongs to the TRIM/RBCC family. Homodimerizes via its coiled-coil domain. Heterodimerizes with MID1, TRIM24 and PML. Interacts with Galectin-3/LGALS3 in a ULK1-dependent manner; this interaction mediates autophagy of damage endomembranes. Interacts with BECN1. Interacts with ATG16L1. Interacts with p62/SQSTM and LC3B/MAP1LC3B. Post-translationally, phosphorylated by ULK1. Auto-ubiquitinates via its B-Boxes.

It is found in the cytoplasm. It catalyses the reaction S-ubiquitinyl-[E2 ubiquitin-conjugating enzyme]-L-cysteine + [acceptor protein]-L-lysine = [E2 ubiquitin-conjugating enzyme]-L-cysteine + N(6)-ubiquitinyl-[acceptor protein]-L-lysine.. Functionally, E3 ubiquitin ligase that plays an essential role in the organization of autophagic response and ubiquitination upon lysosomal and phagosomal damages. Plays a role in the stress-induced biogenesis and degradation of protein aggresomes by regulating the p62-KEAP1-NRF2 signaling and particularly by modulating the ubiquitination levels and thus stability of NRF2. Acts as a scaffold protein and facilitates autophagic degradation of protein aggregates by interacting with p62/SQSTM, ATG16L1 and LC3B/MAP1LC3B. In turn, protects the cell against oxidative stress-induced cell death as a consequence of endomembrane damage. The sequence is that of E3 ubiquitin-protein ligase TRIM16 (TRIM16) from Pongo abelii (Sumatran orangutan).